The sequence spans 960 residues: MTSKTENKKSVSSKTGRTTNNSTNKKTTEKSVKNVKTVKNNVSIDKNHSIRKNNEWERLYAFMMKYRVKGEKGSNLPVTHTMCDAPYGKYNIPDDMRSKFLRLYENAIVAGFKPHITELHKEYGPIIIDLDFCQPKEHGKRYYTEITIRNVVKLYNSIIKKYLNVEHSSFVTYVSEKERPVLRNGEYHDGLHITYPYICTQPSLQFVMREEFIKLAKKYKIFQKIPLTNNLESVFDEGVIYKTGWLLYGSRKNENSYPYYVSHCFLSIRNELHDYIIPGDNLKSRENIRHFINTHSCRRFFSLNDLTPLAEGVDPLAIDAKLKKIKEKINNNTNNTNTHKNTAELGDHHFNFIKAVSEETLVEAKNLVKLFSVQRATDYHTWYQVGRCLSNIDHRLLEDWITFSKKCPSKFKKEECERLWRNMNMKPSNYTMATLHYFASKDDPDKYFEMKKLKIDGLIKEGMEASHHTIAKLLIEKYKFIYKCASIKNGIWYEFRNHRWIEIDSAYTLRNLISEVLVNEYANRQRILFGEATRQDAENKKEKFNDAVNITKVIKQLNNNTFKNGVIKECADIAYDPNFLRNLDENNYLIGFENGVFDLEAGIFRDGCPDDCISLCTNYKYIEIDEDDETFKNINGFLKKIQPDKSMREYILTLLSTCLSGTNSEESFYVLTGSGANGKSKLMELLKYTLGDLYKPMDIRLLTEKRSSSSSASPELADKKGIRACPFDEPKASDEINTGFMKIFTGGDTITARALYKEPIYFKPQFKPFLLCNELPTIKSDDDGTWRRLKVIPFLSKFIKHSEATKKMKKEGLPKNHFWADTSLSEKLPDWKQGFMCLLLKYFRKYRKHGLIHPKLVTQHTVEYRKKCDVFQDFIGDYLVRVDNTKKGISVMDLYQNMREWYKSNYTGKCPNAKDLRNYVQHRMPTYNKNADMLTCYVLKTEVNQAGELIDDIDNITVVG.

Residues 1 to 32 form a disordered region; the sequence is MTSKTENKKSVSSKTGRTTNNSTNKKTTEKSV. Residues 12 to 25 show a composition bias toward low complexity; sequence SSKTGRTTNNSTNK. The region spanning 646–807 is the SF3 helicase domain; that stretch reads SMREYILTLL…FIKHSEATKK (162 aa).

This chain is Putative helicase L207/L206, found in Acanthamoeba polyphaga mimivirus (APMV).